Consider the following 208-residue polypeptide: Large ribosomal subunit protein eL13 (208 aa).

The protein belongs to the eukaryotic ribosomal protein eL13 family.

This is Large ribosomal subunit protein eL13 (RPL13) from Chlamydomonas sp. (strain W80).